Consider the following 301-residue polypeptide: WD repeat-containing protein SL1-17 (301 aa).

7 WD repeats span residues 11 to 54, 59 to 98, 101 to 140, 143 to 182, 184 to 223, 227 to 266, and 269 to 300; these read AHKE…LKCL, GHRL…LTKT, GDPA…KEGS, LEGK…VQFL, GHAT…LVIP, GHKG…EKHC, and THED…IYQC.

The sequence is that of WD repeat-containing protein SL1-17 from Schistosoma mansoni (Blood fluke).